We begin with the raw amino-acid sequence, 127 residues long: Large-conductance mechanosensitive channel (127 aa).

Helical transmembrane passes span 19–39 (VGVI…TNII), 42–62 (LLGI…VGSA), and 67–87 (GAFI…FLLI).

Belongs to the MscL family. In terms of assembly, homopentamer.

The protein resides in the cell membrane. Channel that opens in response to stretch forces in the membrane lipid bilayer. May participate in the regulation of osmotic pressure changes within the cell. The sequence is that of Large-conductance mechanosensitive channel from Levilactobacillus brevis (strain ATCC 367 / BCRC 12310 / CIP 105137 / JCM 1170 / LMG 11437 / NCIMB 947 / NCTC 947) (Lactobacillus brevis).